Reading from the N-terminus, the 379-residue chain is MPTVFPHDSVGLVTPQTAHFSEPLALACGRSLPAYDLIYETYGQLNAARSNAVLICHALSGHHHAAGFHSADDRKPGWWDSCIGPGKPIDTTKFFVVSLNNLGGCNGSTGPSSIDPDTGKPFGANFPVVTVEDWVNSQARLADLLGIDTWAAVIGGSLGGMQALQWTISYPNRVRHCLAIASAPKLSAQNIAFNEVARQAILTDPEFHGGSFQERGVIPKRGLMLARMVGHITYLSDDSMGEKFGRGLKSEKLNYDFHSVEFQVESYLRYQGEEFSGRFDANTYLLMTKALDYFDPAANFNDDLAKTFANATARFCVMSFTTDWRFSPARSRELVDALMAARKDVCYLEIDAPQGHDAFLIPIPRYLQAFGNYMNRISL.

An AB hydrolase-1 domain is found at 51-360; that stretch reads NAVLICHALS…DAPQGHDAFL (310 aa). The active-site Nucleophile is the S157. R227 is a binding site for substrate. Catalysis depends on residues D323 and H356. D357 contacts substrate.

It belongs to the AB hydrolase superfamily. MetX family. Homodimer.

It localises to the cytoplasm. The catalysed reaction is L-homoserine + succinyl-CoA = O-succinyl-L-homoserine + CoA. It participates in amino-acid biosynthesis; L-methionine biosynthesis via de novo pathway; O-succinyl-L-homoserine from L-homoserine: step 1/1. Its activity is regulated as follows. Requires MetW for activity. In terms of biological role, transfers a succinyl group from succinyl-CoA to L-homoserine, forming succinyl-L-homoserine. This is Homoserine O-succinyltransferase from Pseudomonas syringae pv. syringae (strain B728a).